Reading from the N-terminus, the 58-residue chain is uncharacterized protein (58 aa).

The protein localises to the plastid. It localises to the chloroplast. This is an uncharacterized protein from Pyropia yezoensis (Susabi-nori).